The following is a 564-amino-acid chain: Dihydroxy-acid dehydratase (564 aa).

Residue Cys53 coordinates [2Fe-2S] cluster. Asp85 contacts Mg(2+). A [2Fe-2S] cluster-binding site is contributed by Cys126. 2 residues coordinate Mg(2+): Asp127 and Lys128. An N6-carboxylysine modification is found at Lys128. A [2Fe-2S] cluster-binding site is contributed by Cys203. Glu454 serves as a coordination point for Mg(2+). Catalysis depends on Ser480, which acts as the Proton acceptor.

Belongs to the IlvD/Edd family. Homodimer. [2Fe-2S] cluster is required as a cofactor. Mg(2+) serves as cofactor.

The catalysed reaction is (2R)-2,3-dihydroxy-3-methylbutanoate = 3-methyl-2-oxobutanoate + H2O. It carries out the reaction (2R,3R)-2,3-dihydroxy-3-methylpentanoate = (S)-3-methyl-2-oxopentanoate + H2O. Its pathway is amino-acid biosynthesis; L-isoleucine biosynthesis; L-isoleucine from 2-oxobutanoate: step 3/4. It participates in amino-acid biosynthesis; L-valine biosynthesis; L-valine from pyruvate: step 3/4. Functions in the biosynthesis of branched-chain amino acids. Catalyzes the dehydration of (2R,3R)-2,3-dihydroxy-3-methylpentanoate (2,3-dihydroxy-3-methylvalerate) into 2-oxo-3-methylpentanoate (2-oxo-3-methylvalerate) and of (2R)-2,3-dihydroxy-3-methylbutanoate (2,3-dihydroxyisovalerate) into 2-oxo-3-methylbutanoate (2-oxoisovalerate), the penultimate precursor to L-isoleucine and L-valine, respectively. In Mycobacterium ulcerans (strain Agy99), this protein is Dihydroxy-acid dehydratase.